The sequence spans 186 residues: Adenylate kinase (186 aa).

Residue Gly-12–Thr-17 coordinates ATP. Residues Ser-32–Val-61 form an NMP region. AMP-binding positions include Thr-33, Arg-38, Glu-59–Val-61, Gly-86–Arg-89, and Gln-93. Positions Ser-127–Asp-133 are LID. Arg-128 contacts ATP. Positions 130 and 141 each coordinate AMP. Residue Gly-169 coordinates ATP.

The protein belongs to the adenylate kinase family. In terms of assembly, monomer.

It localises to the cytoplasm. It catalyses the reaction AMP + ATP = 2 ADP. It functions in the pathway purine metabolism; AMP biosynthesis via salvage pathway; AMP from ADP: step 1/1. Its function is as follows. Catalyzes the reversible transfer of the terminal phosphate group between ATP and AMP. Plays an important role in cellular energy homeostasis and in adenine nucleotide metabolism. This is Adenylate kinase from Prochlorococcus marinus (strain MIT 9211).